The primary structure comprises 185 residues: Male-enhanced antigen 1 (185 aa).

Disordered regions lie at residues 1–90 and 104–134; these read MGPE…VGDG and GLHL…IPMD. Acidic residues-rich tracts occupy residues 50-60 and 112-121; these read SSEEPEEEQEE and LESEDEDEEG. A Phosphoserine modification is found at S114.

Highly expressed in testis.

Functionally, may play an important role in spermatogenesis and/or testis development. The protein is Male-enhanced antigen 1 (MEA1) of Homo sapiens (Human).